The sequence spans 101 residues: MTSKLAVALLAAFLLSAALCEGAVLPRSAKELRCLCIKTYSKPFHPKFIKELRVIESGPHCVNTEIIVKLSDGRELCLDPKEPWVQRVVEKFLKRAESQNS.

An N-terminal signal peptide occupies residues 1 to 22; the sequence is MTSKLAVALLAAFLLSAALCEG. Citrulline is present on Arg27. Disulfide bonds link Cys34–Cys61 and Cys36–Cys77.

The protein belongs to the intercrine alpha (chemokine CxC) family. Homodimer. Interacts with TNFAIP6 (via Link domain); this interaction interferes with chemokine binding to glycosaminoglycans. In terms of processing, citrullination at Arg-27 prevents proteolysis, and dampens tissue inflammation, it also enhances leukocytosis, possibly through impaired chemokine clearance from the blood circulation.

It localises to the secreted. Functionally, chemotactic factor that mediates inflammatory response by attracting neutrophils, basophils, and T-cells to clear pathogens and protect the host from infection. Also plays an important role in neutrophil activation. Released in response to an inflammatory stimulus, exerts its effect by binding to the G-protein-coupled receptors CXCR1 and CXCR2, primarily found in neutrophils, monocytes and endothelial cells. G-protein heterotrimer (alpha, beta, gamma subunits) constitutively binds to CXCR1/CXCR2 receptor and activation by IL8 leads to beta and gamma subunits release from Galpha (GNAI2 in neutrophils) and activation of several downstream signaling pathways including PI3K and MAPK pathways. The sequence is that of Interleukin-8 (CXCL8) from Cercocebus atys (Sooty mangabey).